Here is a 282-residue protein sequence, read N- to C-terminus: Nucleotide-binding protein ABO_0549 (282 aa).

8-15 (GRSGSGKT) contributes to the ATP binding site. 59 to 62 (DARN) serves as a coordination point for GTP.

The protein belongs to the RapZ-like family.

Displays ATPase and GTPase activities. This Alcanivorax borkumensis (strain ATCC 700651 / DSM 11573 / NCIMB 13689 / SK2) protein is Nucleotide-binding protein ABO_0549.